A 317-amino-acid chain; its full sequence is Glycerol-3-phosphate dehydrogenase [NAD(P)+] (317 aa).

NADPH is bound by residues Ser14, Phe15, Arg35, and Lys109. The sn-glycerol 3-phosphate site is built by Lys109 and Gly137. Ala141 provides a ligand contact to NADPH. Residues Lys192, Asp248, Ser258, Arg259, and Asn260 each contribute to the sn-glycerol 3-phosphate site. Lys192 functions as the Proton acceptor in the catalytic mechanism. Position 259 (Arg259) interacts with NADPH. Residues Leu283 and Glu285 each coordinate NADPH.

It belongs to the NAD-dependent glycerol-3-phosphate dehydrogenase family.

It localises to the cytoplasm. It catalyses the reaction sn-glycerol 3-phosphate + NAD(+) = dihydroxyacetone phosphate + NADH + H(+). It carries out the reaction sn-glycerol 3-phosphate + NADP(+) = dihydroxyacetone phosphate + NADPH + H(+). It participates in membrane lipid metabolism; glycerophospholipid metabolism. Its function is as follows. Catalyzes the reduction of the glycolytic intermediate dihydroxyacetone phosphate (DHAP) to sn-glycerol 3-phosphate (G3P), the key precursor for phospholipid synthesis. The polypeptide is Glycerol-3-phosphate dehydrogenase [NAD(P)+] (Rickettsia akari (strain Hartford)).